A 388-amino-acid chain; its full sequence is P2X purinoceptor 4 (388 aa).

Residues 1–33 (MAGCCSVLGSFLFEYDTPRIVLIRSRKVGLMNR) lie on the Cytoplasmic side of the membrane. A helical transmembrane segment spans residues 34–54 (VVQLLILAYVIGWVFVWEKGY). Topologically, residues 55–338 (QETDSVVSSV…KFDIIPTMIN (284 aa)) are extracellular. Positions 67 and 69 each coordinate ATP. Lys-67 and Lys-69 together coordinate CTP. Asn-75, Asn-110, Asn-131, Asn-153, and Asn-184 each carry an N-linked (GlcNAc...) asparagine glycan. 3 cysteine pairs are disulfide-bonded: Cys-116/Cys-165, Cys-126/Cys-149, and Cys-132/Cys-159. Residues Thr-186 and Leu-188 each coordinate ATP. Thr-186 serves as a coordination point for CTP. Residues Asn-199 and Asn-208 are each glycosylated (N-linked (GlcNAc...) asparagine). Intrachain disulfides connect Cys-217/Cys-227 and Cys-261/Cys-270. Residues Asn-293, Arg-295, and Lys-313 each coordinate ATP. 3 residues coordinate CTP: Asn-293, Arg-295, and Lys-313. The chain crosses the membrane as a helical span at residues 339–359 (VGSGLALLGVATVLCDVIVLY). Topologically, residues 360–388 (CMKKRYYYRDKKYKYVEDYEQGLSGEMNQ) are cytoplasmic.

The protein belongs to the P2X receptor family. In terms of assembly, functional P2RXs are organized as homomeric and heteromeric trimers. Functional P2XRs are organized as homomeric and heteromeric trimers. Forms heterotrimer with P2RX1. Interacts with P2RX7 (via C-terminus); this interaction is functional only in the presence of ATP. Forms heterotrimer with P2RX4; functional differences between homomeric P2RX4 and P2RX4/6 heterotrimer are minor. Interacts with AP1M2.

It is found in the cell membrane. Its subcellular location is the lysosome membrane. It catalyses the reaction K(+)(in) = K(+)(out). The enzyme catalyses Na(+)(in) = Na(+)(out). The catalysed reaction is Ca(2+)(in) = Ca(2+)(out). Activated by ATP. pH-dependent and inhibited by acidic pH. Its function is as follows. ATP-gated nonselective transmembrane cation channel permeable to potassium, sodium and calcium. CTP, but not GTP or UTP, functions as a weak affinity agonist for P2RX4. Activated by extracellularly released ATP, it plays multiple role in immunity and central nervous system physiology. Plays a key role in initial steps of T-cell activation and Ca(2+) microdomain formation. Also participates in basal T-cell activity without TCR/CD3 stimulation. Promotes the differentiation and activation of Th17 cells via expression of retinoic acid-related orphan receptor C/RORC. Upon activation, drives microglia motility via the PI3K/Akt pathway. Could also function as an ATP-gated cation channel of lysosomal membranes. This Mus musculus (Mouse) protein is P2X purinoceptor 4 (P2rx4).